A 492-amino-acid chain; its full sequence is 3-ketoacyl-CoA synthase 5 (492 aa).

The next 2 helical transmembrane spans lie at 20 to 40 (LINNFLTLLLIPVIATVAIEL) and 59 to 79 (LLHILCSSFLIIFVSTVYFMS). Residues 76 to 365 (YFMSKPRTVY…FLSSLIGRKI (290 aa)) enclose the FAE domain. Catalysis depends on residues Cys220, His299, His383, His387, His416, and Asn420.

This sequence belongs to the thiolase-like superfamily. Chalcone/stilbene synthases family. As to expression, expressed in siliques, flowers, leaves and seedlings.

Its subcellular location is the membrane. The enzyme catalyses a very-long-chain acyl-CoA + malonyl-CoA + H(+) = a very-long-chain 3-oxoacyl-CoA + CO2 + CoA. It participates in lipid metabolism; fatty acid biosynthesis. Its activity is regulated as follows. Inhibited by K3 herbicides such as alachlor, allidochlor, anilofos, cafenstrole and flufenacet. Strongly inhibited by metazachlor and mefluidide. Its function is as follows. Mediates mostly the synthesis of VLCFAs from 26 to 30 carbons in length (e.g. C20:1, C26, C28, C30). The protein is 3-ketoacyl-CoA synthase 5 of Arabidopsis thaliana (Mouse-ear cress).